Reading from the N-terminus, the 379-residue chain is Succinyl-diaminopimelate desuccinylase (379 aa).

Residue H70 participates in Zn(2+) binding. Residue D72 is part of the active site. A Zn(2+)-binding site is contributed by D103. E137 acts as the Proton acceptor in catalysis. Positions 138, 166, and 352 each coordinate Zn(2+).

It belongs to the peptidase M20A family. DapE subfamily. In terms of assembly, homodimer. It depends on Zn(2+) as a cofactor. Co(2+) serves as cofactor.

It carries out the reaction N-succinyl-(2S,6S)-2,6-diaminopimelate + H2O = (2S,6S)-2,6-diaminopimelate + succinate. It functions in the pathway amino-acid biosynthesis; L-lysine biosynthesis via DAP pathway; LL-2,6-diaminopimelate from (S)-tetrahydrodipicolinate (succinylase route): step 3/3. Its function is as follows. Catalyzes the hydrolysis of N-succinyl-L,L-diaminopimelic acid (SDAP), forming succinate and LL-2,6-diaminopimelate (DAP), an intermediate involved in the bacterial biosynthesis of lysine and meso-diaminopimelic acid, an essential component of bacterial cell walls. This Shewanella baltica (strain OS223) protein is Succinyl-diaminopimelate desuccinylase.